The chain runs to 320 residues: MRQTKTGILLANLGTPDAPTPEAVKRYLKQFLSDRRVVDTPRLLWWPLLRGVILPLRSPRVAKLYQSIWMDGGSPLMVYSREQQQALAARLPDTPVALGMSYGSPSLESAVDELLASDVDHIVVLPLYPQYSCSTVGAVWDELGRILARKRRIPGISFIRDYADDGAYIDALAKSARESFARHGEPDVLLLSYHGIPQRYADEGDDYPQRCRDTTRELVSALGLPPEKVMMTFQSRFGREPWLTPYTDETLKMLGEKGTGHIQVMCPGFAADCLETLEEIAEQNREIFLEVGGKKYAYIPALNATPEHIDMMLKLTAPYR.

2 residues coordinate Fe cation: His194 and Glu275.

This sequence belongs to the ferrochelatase family. As to quaternary structure, monomer.

Its subcellular location is the cytoplasm. It catalyses the reaction heme b + 2 H(+) = protoporphyrin IX + Fe(2+). The protein operates within porphyrin-containing compound metabolism; protoheme biosynthesis; protoheme from protoporphyrin-IX: step 1/1. Functionally, catalyzes the ferrous insertion into protoporphyrin IX. The sequence is that of Ferrochelatase from Salmonella paratyphi A (strain ATCC 9150 / SARB42).